A 213-amino-acid polypeptide reads, in one-letter code: 3-isopropylmalate dehydratase small subunit (213 aa).

It belongs to the LeuD family. LeuD type 1 subfamily. Heterodimer of LeuC and LeuD.

It catalyses the reaction (2R,3S)-3-isopropylmalate = (2S)-2-isopropylmalate. It functions in the pathway amino-acid biosynthesis; L-leucine biosynthesis; L-leucine from 3-methyl-2-oxobutanoate: step 2/4. Catalyzes the isomerization between 2-isopropylmalate and 3-isopropylmalate, via the formation of 2-isopropylmaleate. This is 3-isopropylmalate dehydratase small subunit from Pseudomonas syringae pv. syringae (strain B728a).